A 188-amino-acid chain; its full sequence is Guanylate kinase (188 aa).

Residues 4–183 (RNIVVLTAPS…AVEETLTRIR (180 aa)) form the Guanylate kinase-like domain. Position 11–18 (11–18 (APSGAGKT)) interacts with ATP.

Belongs to the guanylate kinase family.

Its subcellular location is the cytoplasm. It carries out the reaction GMP + ATP = GDP + ADP. Functionally, essential for recycling GMP and indirectly, cGMP. The sequence is that of Guanylate kinase from Salinibacter ruber (strain DSM 13855 / M31).